Consider the following 473-residue polypeptide: Cardiolipin synthase C (473 aa).

PLD phosphodiesterase domains lie at 125–152 (LNRR…GDAY) and 364–391 (SGAS…DPRS). Catalysis depends on residues His-130, Lys-132, Asp-137, His-369, Lys-371, and Asp-376.

Belongs to the phospholipase D family. Cardiolipin synthase subfamily. ClsC sub-subfamily.

It carries out the reaction a 1,2-diacyl-sn-glycero-3-phospho-(1'-sn-glycerol) + a 1,2-diacyl-sn-glycero-3-phosphoethanolamine = a cardiolipin + ethanolamine. With respect to regulation, full activity requires coexpression with the neighboring gene ymdB. Catalyzes the synthesis of cardiolipin (CL) (diphosphatidylglycerol) from phosphatidylglycerol (PG) and phosphatidylethanolamine (PE). The chain is Cardiolipin synthase C from Escherichia coli (strain K12).